A 162-amino-acid polypeptide reads, in one-letter code: Protein archease (162 aa).

3 residues coordinate Ca(2+): D34, D161, and I162.

It belongs to the archease family. In terms of assembly, component of the tRNA-splicing ligase complex.

Functionally, component of the tRNA-splicing ligase complex required to facilitate the enzymatic turnover of catalytic subunit RTCB. Together with ddx1, acts by facilitating the guanylylation of RTCB, a key intermediate step in tRNA ligation. The polypeptide is Protein archease (zbtb8os) (Danio rerio (Zebrafish)).